The chain runs to 858 residues: Bifunctional uridylyltransferase/uridylyl-removing enzyme (858 aa).

The interval 1–324 (MSAHAAPSPE…PATSGITRVL (324 aa)) is uridylyltransferase. Positions 325–681 (SADRFVEKQG…ARPSPIGDAL (357 aa)) are uridylyl-removing. An HD domain is found at 443-565 (VDQHILMVLR…VGNERYLTAL (123 aa)). ACT domains follow at residues 682-763 (QVLV…PSKG) and 790-858 (ILSV…AIAV).

This sequence belongs to the GlnD family. It depends on Mg(2+) as a cofactor.

It catalyses the reaction [protein-PII]-L-tyrosine + UTP = [protein-PII]-uridylyl-L-tyrosine + diphosphate. The enzyme catalyses [protein-PII]-uridylyl-L-tyrosine + H2O = [protein-PII]-L-tyrosine + UMP + H(+). Uridylyltransferase (UTase) activity is inhibited by glutamine, while glutamine activates uridylyl-removing (UR) activity. Modifies, by uridylylation and deuridylylation, the PII regulatory proteins (GlnB and homologs), in response to the nitrogen status of the cell that GlnD senses through the glutamine level. Under low glutamine levels, catalyzes the conversion of the PII proteins and UTP to PII-UMP and PPi, while under higher glutamine levels, GlnD hydrolyzes PII-UMP to PII and UMP (deuridylylation). Thus, controls uridylylation state and activity of the PII proteins, and plays an important role in the regulation of nitrogen assimilation and metabolism. The protein is Bifunctional uridylyltransferase/uridylyl-removing enzyme of Burkholderia orbicola (strain AU 1054).